The following is a 304-amino-acid chain: MELTFLGTSAGLPSTTRNVTAIVLNPQNNRSGLWLFDCGEGTQHQMLRATATPGKIEKIFITHLHGDHIFGLPGLLCSRSMAGCETPLEIYGPKGIAEFVETTLRLSGSWTSYPLNVHEITEGQLLDDGELTVTAYPLTHPVECYGYRIEEQDKPGALDAARLKAAGVMPGPLFQQLKRGETVTLADGRTVCGADYLSAPRPGKKIAIFGDTGPTPQAVTLARDVDVMVHETTLEAAMAEKANGRGHSTTQQAAEVARDAGAKRLLMTHFSSRYSAEECQRLLAECQAIFPASELAEDFLTITV.

Residues His-63, His-65, Asp-67, His-68, His-140, Asp-211, and His-269 each contribute to the Zn(2+) site. The active-site Proton acceptor is the Asp-67.

Belongs to the RNase Z family. RNase BN subfamily. In terms of assembly, homodimer. Zn(2+) serves as cofactor.

Zinc phosphodiesterase, which has both exoribonuclease and endoribonuclease activities. This chain is Ribonuclease BN, found in Cronobacter sakazakii (strain ATCC BAA-894) (Enterobacter sakazakii).